We begin with the raw amino-acid sequence, 243 residues long: Biosynthetic peptidoglycan transglycosylase (243 aa).

The helical transmembrane segment at 21 to 43 (LLIVSLVSALMSVLQVIVFRFVD) threads the bilayer.

The protein belongs to the glycosyltransferase 51 family.

Its subcellular location is the cell inner membrane. The catalysed reaction is [GlcNAc-(1-&gt;4)-Mur2Ac(oyl-L-Ala-gamma-D-Glu-L-Lys-D-Ala-D-Ala)](n)-di-trans,octa-cis-undecaprenyl diphosphate + beta-D-GlcNAc-(1-&gt;4)-Mur2Ac(oyl-L-Ala-gamma-D-Glu-L-Lys-D-Ala-D-Ala)-di-trans,octa-cis-undecaprenyl diphosphate = [GlcNAc-(1-&gt;4)-Mur2Ac(oyl-L-Ala-gamma-D-Glu-L-Lys-D-Ala-D-Ala)](n+1)-di-trans,octa-cis-undecaprenyl diphosphate + di-trans,octa-cis-undecaprenyl diphosphate + H(+). It functions in the pathway cell wall biogenesis; peptidoglycan biosynthesis. Peptidoglycan polymerase that catalyzes glycan chain elongation from lipid-linked precursors. This Xylella fastidiosa (strain M12) protein is Biosynthetic peptidoglycan transglycosylase.